Here is a 2225-residue protein sequence, read N- to C-terminus: Multifunctional protein pyr1-3 (2225 aa).

At M1 the chain carries N-acetylmethionine. A GATase (Glutamine amidotransferase) region spans residues M40 to S390. S51, G245, and G247 together coordinate L-glutamine. Residues K196 to H388 form the Glutamine amidotransferase type-1 domain. C275 functions as the Nucleophile; for GATase activity in the catalytic mechanism. Residues Q279, N317, G319, and F320 each coordinate L-glutamine. Active-site for GATase activity residues include H361 and E363. The interval P391–N405 is linker. Positions K406 to S948 are CPSase A. The segment at K406–V1461 is CPSase (Carbamoyl-phosphate synthase). ATP contacts are provided by R526, R566, G572, G573, K603, E610, G636, I637, H638, Q679, and E693. ATP-grasp domains are found at residues A530–L722 and S1069–I1260. Mg(2+) contacts are provided by Q679, E693, and N695. 3 residues coordinate Mn(2+): Q679, E693, and N695. The tract at residues Y949–V1461 is CPSase B. Residues R1105, K1144, I1146, E1151, G1176, V1177, H1178, S1179, Q1219, and E1231 each coordinate ATP. Residues Q1219, E1231, and N1233 each contribute to the Mg(2+) site. Positions 1219, 1231, and 1233 each coordinate Mn(2+). Positions F1324–I1470 constitute an MGS-like domain. Residues W1463–L1797 are DHOase (dihydroorotase). Positions 1479 and 1481 each coordinate Zn(2+). Positions 1483 and 1513 each coordinate (S)-dihydroorotate. Positions 1564, 1599, 1622, 1623, and 1646 each coordinate Zn(2+). K1564 is modified (N6-carboxylysine). R1670 contacts (S)-dihydroorotate. Residue D1695 coordinates Zn(2+). D1695 acts as the For DHOase activity in catalysis. 2 residues coordinate (S)-dihydroorotate: H1699 and P1711. Positions R1798–S1916 are linker. An ATCase (Aspartate transcarbamylase) region spans residues D1917–V2225. 2 residues coordinate carbamoyl phosphate: R1974 and T1975. K2002 lines the L-aspartate pocket. Carbamoyl phosphate-binding residues include R2023, H2051, and Q2054. L-aspartate contacts are provided by R2084 and R2145. Positions 2184 and 2185 each coordinate carbamoyl phosphate.

This sequence in the N-terminal section; belongs to the CarA family. The protein in the 2nd section; belongs to the CarB family. It in the 3rd section; belongs to the metallo-dependent hydrolases superfamily. DHOase family. CAD subfamily. In the C-terminal section; belongs to the aspartate/ornithine carbamoyltransferase superfamily. ATCase family. In terms of assembly, homohexamer. Mg(2+) is required as a cofactor. Mn(2+) serves as cofactor. It depends on Zn(2+) as a cofactor.

The protein localises to the cytoplasm. The catalysed reaction is hydrogencarbonate + L-glutamine + 2 ATP + H2O = carbamoyl phosphate + L-glutamate + 2 ADP + phosphate + 2 H(+). It carries out the reaction L-glutamine + H2O = L-glutamate + NH4(+). The enzyme catalyses hydrogencarbonate + NH4(+) + 2 ATP = carbamoyl phosphate + 2 ADP + phosphate + 2 H(+). It catalyses the reaction carbamoyl phosphate + L-aspartate = N-carbamoyl-L-aspartate + phosphate + H(+). The catalysed reaction is (S)-dihydroorotate + H2O = N-carbamoyl-L-aspartate + H(+). It functions in the pathway pyrimidine metabolism; UMP biosynthesis via de novo pathway; (S)-dihydroorotate from bicarbonate: step 1/3. Its pathway is pyrimidine metabolism; UMP biosynthesis via de novo pathway; (S)-dihydroorotate from bicarbonate: step 2/3. The protein operates within pyrimidine metabolism; UMP biosynthesis via de novo pathway; (S)-dihydroorotate from bicarbonate: step 3/3. Its activity is regulated as follows. Allosterically regulated and controlled by phosphorylation. 5-phosphoribose 1-diphosphate is an activator while UMP is an inhibitor of the CPSase reaction. Its function is as follows. Multifunctional protein that encodes the first 3 enzymatic activities of the de novo pyrimidine pathway: carbamoylphosphate synthetase (CPSase; EC 6.3.5.5), aspartate transcarbamylase (ATCase; EC 2.1.3.2) and dihydroorotase (DHOase; EC 3.5.2.3). The CPSase-function is accomplished in 2 steps, by a glutamine-dependent amidotransferase activity (GATase) that binds and cleaves glutamine to produce ammonia, followed by an ammonium-dependent carbamoyl phosphate synthetase, which reacts with the ammonia, hydrogencarbonate and ATP to form carbamoyl phosphate. The endogenously produced carbamoyl phosphate is sequestered and channeled to the ATCase active site. ATCase then catalyzes the formation of carbamoyl-L-aspartate from L-aspartate and carbamoyl phosphate. In the last step, DHOase catalyzes the cyclization of carbamoyl aspartate to dihydroorotate. This chain is Multifunctional protein pyr1-3 (pyr1-3), found in Dictyostelium discoideum (Social amoeba).